The sequence spans 94 residues: UPF0235 protein TK0768 (94 aa).

It belongs to the UPF0235 family.

The sequence is that of UPF0235 protein TK0768 from Thermococcus kodakarensis (strain ATCC BAA-918 / JCM 12380 / KOD1) (Pyrococcus kodakaraensis (strain KOD1)).